A 681-amino-acid polypeptide reads, in one-letter code: PTS system glucose-specific EIICBA component (681 aa).

One can recognise a PTS EIIC type-1 domain in the interval 3-414 (KKLFGQLQRI…LKYKTPGRED (412 aa)). The next 10 membrane-spanning stretches (helical) occupy residues 16–36 (LMLPVAILPAAGLLLAIGTAM), 73–93 (MIFALGVAIGLAGGDGVAAIA), 126–146 (ILGIPTLQTGVFGGIIIGALA), 170–190 (FVPIMMATTSFILAFPMALIW), 199–219 (AFSTGLLDSNTGVAVFLFGFI), 273–293 (FMQGEFPVMMFGLPAAALAIY), 303–323 (VVAGLMGSAALTSFLTGITEP), 328–348 (FLFVAPLLFFIHAVLDGLSFL), 355–375 (LHLGYTFSGGFIDYFLLGILP), and 383–403 (VIPVGLVYAVIYYFVFRFLIV). Residues 425-506 (TELPYAVLEA…QQIMNGQVVE (82 aa)) enclose the PTS EIIB type-1 domain. Catalysis depends on C447, which acts as the Phosphocysteine intermediate; for EIIB activity. Positions 551–655 (DQVFSEKMMG…SDITPIIVTQ (105 aa)) constitute a PTS EIIA type-1 domain. The active-site Tele-phosphohistidine intermediate; for EIIA activity is H603.

The protein resides in the cell membrane. It catalyses the reaction N(pros)-phospho-L-histidyl-[protein] + D-glucose(out) = D-glucose 6-phosphate(in) + L-histidyl-[protein]. In terms of biological role, the phosphoenolpyruvate-dependent sugar phosphotransferase system (sugar PTS), a major carbohydrate active transport system, catalyzes the phosphorylation of incoming sugar substrates concomitantly with their translocation across the cell membrane. This system is involved in glucose transport. The protein is PTS system glucose-specific EIICBA component (ptsG) of Staphylococcus aureus (strain NCTC 8325 / PS 47).